The following is a 512-amino-acid chain: MEDFKGYLQKGGFKQQHLLYPLLFQEYIYALAHDQGLNVNASTFNEPPEISGYDKKYSSLLVKRLINRLYQQNTFIHSVNNSKDNRFVGHNKNFYYQMISEAFAIVVEIPFSRRLVSSLKEKKEIPKYQNLRSIHSLFSFLEDKFSHLNYVSDILVPYPVHLEILVQILQCWIQDVPTLHLLRLLFQDYHNGNNRITPNKSTYGFSKDNPRLYRFLYNSYVVEYEAIFVFLRKSSSYLRSTSFGPLLERTHFYRKMKHIGVTCCNDFQKTLWLFKDALMHYVRYQGKSIMASKGNHLLMKKWKSYFVNLWQCHFHFWSQPSRIHINQFPHFSFYFLGYLSSVPINPSSAKSQMLENSFLIDTVTPKFETMISIIPMIGSLAKAKFCNLSGNPLSKPVWAELSDSDIIDRFGRIYRNLSHYYSGSSKKQTLYRIKYILRLSCARTLARKHKSTVRAFLQRLGSEFFEEFFIEEDKILSLILPTTSYSLQQLSRESVWFLDIIRINDLVNHLDL.

Belongs to the intron maturase 2 family. MatK subfamily.

Its subcellular location is the plastid. It localises to the chloroplast. Usually encoded in the trnK tRNA gene intron. Probably assists in splicing its own and other chloroplast group II introns. The chain is Maturase K from Lemna minuta (Least duckweed).